The chain runs to 203 residues: Ribonuclease HII (203 aa).

Residues E16–L203 form the RNase H type-2 domain. D22, E23, and D120 together coordinate a divalent metal cation.

This sequence belongs to the RNase HII family. Mn(2+) is required as a cofactor. The cofactor is Mg(2+).

Its subcellular location is the cytoplasm. The enzyme catalyses Endonucleolytic cleavage to 5'-phosphomonoester.. In terms of biological role, endonuclease that specifically degrades the RNA of RNA-DNA hybrids. The chain is Ribonuclease HII from Alkaliphilus oremlandii (strain OhILAs) (Clostridium oremlandii (strain OhILAs)).